A 91-amino-acid chain; its full sequence is Transcription factor ILI3 (91 aa).

Positions 3–58 (SRRGGGGGGGRITDEEINELISKLQALLPESSRSRGASRSSASKLLKETCSYIKSL) constitute a bHLH domain.

Belongs to the bHLH protein family.

In terms of biological role, atypical and probable non DNA-binding bHLH transcription that integrates multiple signaling pathways to regulate cell elongation and plant development. This Oryza sativa subsp. indica (Rice) protein is Transcription factor ILI3 (ILI3).